The chain runs to 141 residues: Ubiquitin-like protein ATG12 (141 aa).

The disordered stretch occupies residues 1–53 (MSEDSEVVLQLPSAPVGAGGESLPELSPETATPEPPSSAAVSPGTEEPPGDTK). Over residues 23–40 (LPELSPETATPEPPSSAA) the composition is skewed to low complexity. A Glycyl lysine isopeptide (Gly-Lys) (interchain with K-? in acceptor protein) cross-link involves residue glycine 141.

The protein belongs to the ATG12 family. As to quaternary structure, forms a conjugate with ATG5. Part of the minor complex composed of 4 sets of ATG12-ATG5 and ATG16L1 (400 kDa); this complex interacts with ATG3 leading to disruption of ATG7 interaction and promotion of ATG8-like proteins lipidation. Forms an 800-kDa complex composed of ATG12-ATG5 and ATG16L2. Interacts with DHX58/RIG-1, IFIH1/MDA5 and MAVS/IPS-1 in monomeric form as well as in ATG12-ATG5 conjugate. The interaction with MAVS is further enhanced upon vesicular stomatitis virus (VSV) infection. Interacts with ATG3; this interaction is essential for phosphatidylethanolamine (PE)-conjugated ATG8-like proteins formation. Interacts with ATG7. Interacts with ATG10. The ATG12-ATG5 conjugate interacts with RAB33A; this interaction is bridged by ATG16L1 and promotes ATG12-ATG5-ATG16L1 complex recruitment to phagophores. Interacts with TECPR1. Interacts with SH3BGRL. The ATG12-ATG5 conjugate interacts with PDCD6IP (via the BRO1 domain); this interaction is bridged by ATG12 and promotes multiple PDCD6IP-mediated functions such as endolysosomal trafficking, macroautophagy and exosome biogenesis. In terms of processing, acetylated by EP300. Ubiquitous.

It localises to the cytoplasm. The protein localises to the preautophagosomal structure membrane. Functionally, ubiquitin-like protein involved in autophagy vesicles formation. Conjugation with ATG5 through a ubiquitin-like conjugating system involving also ATG7 as an E1-like activating enzyme and ATG10 as an E2-like conjugating enzyme, is essential for its function. The ATG12-ATG5 conjugate acts as an E3-like enzyme which is required for lipidation of ATG8 family proteins and their association to the vesicle membranes. As part of the ATG8 conjugation system with ATG5 and ATG16L1, required for recruitment of LRRK2 to stressed lysosomes and induction of LRRK2 kinase activity in response to lysosomal stress. Its function is as follows. (Microbial infection) May act as a proviral factor. In association with ATG5, negatively regulates the innate antiviral immune response by impairing the type I IFN production pathway upon vesicular stomatitis virus (VSV) infection. The protein is Ubiquitin-like protein ATG12 of Mus musculus (Mouse).